The primary structure comprises 405 residues: MGALTIVAKYMIVAQIEVNGSVDKSDIIGALFSQTEGLLGKDMDLRELQMMGRIGRIEVEISEKNSKTKARIYIPSNLDRYETALVAALIESVERVGPYLASVKVLEIKDLREEKRRKIIERAKELVKLIEEEILPDTKEIIERLKEDVAKAEIIEYGPEKLPAGPDVDKSDSIIVVEGRADVVNLVKHGYRNVIAIEGISKGVPQTIIDLSKKKSVTVFIDGDKGGEIVLRELIKVAHIDYIARAPPGKEVEQLTAKEIAKALRNKITLEEWLAQQKAAGEKTESQMSPQQPQLTQTQPTTAEVQAPFDLSKKIEEMLGTLEAEIYDANWTLLKRLPVRELPDFLANSNDSIYAVVMDGIVTQRIVDLATKRGVKVIITARVGPLTKVPEDMKIVTFDQITQKT.

Residues 172-248 form the Toprim domain; sequence DSIIVVEGRA…HIDYIARAPP (77 aa). Residues Glu178, Asp222, and Asp224 each coordinate Mg(2+). Positions 279-302 are disordered; that stretch reads AAGEKTESQMSPQQPQLTQTQPTT. A compositionally biased stretch (low complexity) spans 290–302; sequence PQQPQLTQTQPTT.

This sequence belongs to the archaeal DnaG primase family. In terms of assembly, forms a ternary complex with MCM helicase and DNA. Component of the archaeal exosome complex. Mg(2+) serves as cofactor.

The catalysed reaction is ssDNA + n NTP = ssDNA/pppN(pN)n-1 hybrid + (n-1) diphosphate.. Its function is as follows. RNA polymerase that catalyzes the synthesis of short RNA molecules used as primers for DNA polymerase during DNA replication. Also part of the exosome, which is a complex involved in RNA degradation. Acts as a poly(A)-binding protein that enhances the interaction between heteromeric, adenine-rich transcripts and the exosome. The protein is DNA primase DnaG of Pyrobaculum islandicum (strain DSM 4184 / JCM 9189 / GEO3).